Consider the following 195-residue polypeptide: Imidazoleglycerol-phosphate dehydratase (195 aa).

It belongs to the imidazoleglycerol-phosphate dehydratase family.

Its subcellular location is the cytoplasm. It catalyses the reaction D-erythro-1-(imidazol-4-yl)glycerol 3-phosphate = 3-(imidazol-4-yl)-2-oxopropyl phosphate + H2O. It participates in amino-acid biosynthesis; L-histidine biosynthesis; L-histidine from 5-phospho-alpha-D-ribose 1-diphosphate: step 6/9. This is Imidazoleglycerol-phosphate dehydratase from Polynucleobacter asymbioticus (strain DSM 18221 / CIP 109841 / QLW-P1DMWA-1) (Polynucleobacter necessarius subsp. asymbioticus).